Consider the following 299-residue polypeptide: MDPSILSKIHYSGITCNNYGFYNTPFYLKRDKEDNVECYQTNIFMYYDDHDDHNMTDCDYTYCFVKDLCVSICRGSDDNDENHSFLKAKIIISDSLKLTGIKNDTDGSIEFPQIDNENPLILREDNSTTIKINLFGQLSDLINYQIQVKFSAGVIDKSTADYFNNNEFVCFDDFTFSRGTYLENSDSTESEFYREAILIKGRKFDFYPYQGHHVFDIEYDFLDHNFNPIQPSNNLLEKLYFVKDHNKSKISSICSYTETNPLLVDKYYDDNYIDGLFEIMRKKEMVLYVKFMVKKIDSD.

This is an uncharacterized protein from Acanthamoeba polyphaga mimivirus (APMV).